Reading from the N-terminus, the 395-residue chain is Glutamate N-acetyltransferase (395 aa).

The substrate site is built by Thr146, Lys169, Thr180, Glu263, Asn390, and Thr395. Thr180 (nucleophile) is an active-site residue.

The protein belongs to the ArgJ family. Heterotetramer of two alpha and two beta chains.

It is found in the cytoplasm. The enzyme catalyses N(2)-acetyl-L-ornithine + L-glutamate = N-acetyl-L-glutamate + L-ornithine. Its pathway is amino-acid biosynthesis; L-arginine biosynthesis; L-ornithine and N-acetyl-L-glutamate from L-glutamate and N(2)-acetyl-L-ornithine (cyclic): step 1/1. Its function is as follows. Catalyzes the transfer of the acetyl group from N(2)-acetylornithine to glutamate, forming N-acetylglutamate and L-ornithine. This Methanosarcina mazei (strain ATCC BAA-159 / DSM 3647 / Goe1 / Go1 / JCM 11833 / OCM 88) (Methanosarcina frisia) protein is Glutamate N-acetyltransferase.